We begin with the raw amino-acid sequence, 466 residues long: 3-isopropylmalate dehydratase large subunit (466 aa).

[4Fe-4S] cluster is bound by residues C347, C407, and C410.

It belongs to the aconitase/IPM isomerase family. LeuC type 1 subfamily. As to quaternary structure, heterodimer of LeuC and LeuD. [4Fe-4S] cluster serves as cofactor.

The catalysed reaction is (2R,3S)-3-isopropylmalate = (2S)-2-isopropylmalate. It functions in the pathway amino-acid biosynthesis; L-leucine biosynthesis; L-leucine from 3-methyl-2-oxobutanoate: step 2/4. In terms of biological role, catalyzes the isomerization between 2-isopropylmalate and 3-isopropylmalate, via the formation of 2-isopropylmaleate. The polypeptide is 3-isopropylmalate dehydratase large subunit (Shewanella pealeana (strain ATCC 700345 / ANG-SQ1)).